A 288-amino-acid chain; its full sequence is Light-independent protochlorophyllide reductase iron-sulfur ATP-binding protein (288 aa).

ATP is bound by residues 10–15 (GIGKST) and K39. S14 lines the Mg(2+) pocket. C95 and C129 together coordinate [4Fe-4S] cluster. Residue 180-181 (NR) coordinates ATP.

Belongs to the NifH/BchL/ChlL family. In terms of assembly, homodimer. Protochlorophyllide reductase is composed of three subunits; ChlL, ChlN and ChlB. [4Fe-4S] cluster is required as a cofactor.

The catalysed reaction is chlorophyllide a + oxidized 2[4Fe-4S]-[ferredoxin] + 2 ADP + 2 phosphate = protochlorophyllide a + reduced 2[4Fe-4S]-[ferredoxin] + 2 ATP + 2 H2O. The protein operates within porphyrin-containing compound metabolism; chlorophyll biosynthesis (light-independent). In terms of biological role, component of the dark-operative protochlorophyllide reductase (DPOR) that uses Mg-ATP and reduced ferredoxin to reduce ring D of protochlorophyllide (Pchlide) to form chlorophyllide a (Chlide). This reaction is light-independent. The L component serves as a unique electron donor to the NB-component of the complex, and binds Mg-ATP. This is Light-independent protochlorophyllide reductase iron-sulfur ATP-binding protein from Nostoc sp. (strain PCC 7120 / SAG 25.82 / UTEX 2576).